Reading from the N-terminus, the 263-residue chain is Purine nucleoside phosphorylase SACOL1200 (263 aa).

Zn(2+)-binding residues include histidine 79, cysteine 124, and histidine 141.

Belongs to the purine nucleoside phosphorylase YfiH/LACC1 family. In terms of assembly, homodimer. Cu(2+) serves as cofactor. Zn(2+) is required as a cofactor.

It catalyses the reaction adenosine + phosphate = alpha-D-ribose 1-phosphate + adenine. The catalysed reaction is S-methyl-5'-thioadenosine + phosphate = 5-(methylsulfanyl)-alpha-D-ribose 1-phosphate + adenine. It carries out the reaction inosine + phosphate = alpha-D-ribose 1-phosphate + hypoxanthine. The enzyme catalyses adenosine + H2O + H(+) = inosine + NH4(+). Its function is as follows. Purine nucleoside enzyme that catalyzes the phosphorolysis of adenosine and inosine nucleosides, yielding D-ribose 1-phosphate and the respective free bases, adenine and hypoxanthine. Also catalyzes the phosphorolysis of S-methyl-5'-thioadenosine into adenine and S-methyl-5-thio-alpha-D-ribose 1-phosphate. Also has adenosine deaminase activity. This chain is Purine nucleoside phosphorylase SACOL1200, found in Staphylococcus aureus (strain COL).